The chain runs to 208 residues: Small ribosomal subunit protein uS4 (208 aa).

The region spanning 97 to 158 (TRLDNVIYRM…RAQKYLCVQE (62 aa)) is the S4 RNA-binding domain.

Belongs to the universal ribosomal protein uS4 family. Part of the 30S ribosomal subunit. Contacts protein S5. The interaction surface between S4 and S5 is involved in control of translational fidelity.

Its function is as follows. One of the primary rRNA binding proteins, it binds directly to 16S rRNA where it nucleates assembly of the body of the 30S subunit. In terms of biological role, with S5 and S12 plays an important role in translational accuracy. The polypeptide is Small ribosomal subunit protein uS4 (Xylella fastidiosa (strain M23)).